The primary structure comprises 431 residues: Enolase (431 aa).

Q163 serves as a coordination point for (2R)-2-phosphoglycerate. The active-site Proton donor is E205. 3 residues coordinate Mg(2+): D242, E288, and D315. The (2R)-2-phosphoglycerate site is built by K340, R369, S370, and K391. K340 serves as the catalytic Proton acceptor.

This sequence belongs to the enolase family. It depends on Mg(2+) as a cofactor.

It localises to the cytoplasm. The protein localises to the secreted. Its subcellular location is the cell surface. The catalysed reaction is (2R)-2-phosphoglycerate = phosphoenolpyruvate + H2O. The protein operates within carbohydrate degradation; glycolysis; pyruvate from D-glyceraldehyde 3-phosphate: step 4/5. Its function is as follows. Catalyzes the reversible conversion of 2-phosphoglycerate (2-PG) into phosphoenolpyruvate (PEP). It is essential for the degradation of carbohydrates via glycolysis. The sequence is that of Enolase from Bacillus cereus (strain ZK / E33L).